The primary structure comprises 239 residues: Fatty acid metabolism regulator protein (239 aa).

The 69-residue stretch at 6 to 74 (KGPASFAEKY…HGKPTRVNNF (69 aa)) folds into the HTH gntR-type domain. The segment at residues 34 to 53 (ERELSELIGVTRTTLREVLQ) is a DNA-binding region (H-T-H motif).

As to quaternary structure, homodimer.

It is found in the cytoplasm. Functionally, multifunctional regulator of fatty acid metabolism. This is Fatty acid metabolism regulator protein from Shewanella pealeana (strain ATCC 700345 / ANG-SQ1).